The chain runs to 71 residues: Protein SlyX homolog (71 aa).

Belongs to the SlyX family.

The polypeptide is Protein SlyX homolog (Rhodopseudomonas palustris (strain HaA2)).